We begin with the raw amino-acid sequence, 221 residues long: MPKYFCDYCDTYLTHDSPSVRKTHCNGRKHKENVRVYYQKWMEEQAQQLIDQTTAAFQAGKIPNNPFPNAAGQVGNEPGAKVLPPAILQAAAFQAGKIASNPFPTSQAGPGPQGGGTMIPPPPSLQGPGGPGSAPAPPRMPGPLLMTPPPGAAAPGMAPPGAPTLPQPARGPILSVGAVMGPRLCKHSYHINKALFLIKIHTLQKATQSQLVVYKTVEKSK.

The Matrin-type zinc finger occupies tyrosine 4–valine 36. Residues serine 100–proline 168 are disordered. A compositionally biased stretch (pro residues) spans alanine 134 to proline 166.

This sequence belongs to the U1 small nuclear ribonucleoprotein C family. In terms of assembly, U1 snRNP is composed of the 7 core Sm proteins B/B', D1, D2, D3, E, F and G that assemble in a heptameric protein ring on the Sm site of the small nuclear RNA to form the core snRNP, and at least 3 U1 snRNP-specific proteins U1-70K, U1-A and U1-C. U1-C interacts with U1 snRNA and the 5' splice-site region of the pre-mRNA.

It localises to the nucleus. Component of the spliceosomal U1 snRNP, which is essential for recognition of the pre-mRNA 5' splice-site and the subsequent assembly of the spliceosome. U1-C is directly involved in initial 5' splice-site recognition for both constitutive and regulated alternative splicing. The interaction with the 5' splice-site seems to precede base-pairing between the pre-mRNA and the U1 snRNA. Stimulates commitment or early (E) complex formation by stabilizing the base pairing of the 5' end of the U1 snRNA and the 5' splice-site region. In Branchiostoma floridae (Florida lancelet), this protein is U1 small nuclear ribonucleoprotein C.